Consider the following 68-residue polypeptide: Neuronal regeneration-related protein (68 aa).

Interacts with FLNA. Interacts with the latency-associated peptides (LAP) of TGFB1 and TGFB2; the interaction results in a decrease in TGFB autoinduction. Post-translationally, phosphorylated on Ser-59. Phosphorylation decreases stability and activity.

It localises to the cytoplasm. Functionally, may have roles in neural function. Ectopic expression promotes axonal regeneration. Also augments motility of gliomas. May also have roles in cellular differentiation. Induces differentiation of fibroblast into myofibroblast and myofibroblast ameboid migration. Increases retinoic-acid regulation of lipid-droplet biogenesis. Down-regulates the expression of TGFB1 and TGFB2 but not of TGFB3. May play a role in the regulation of alveolar generation. This is Neuronal regeneration-related protein (Nrep) from Rattus norvegicus (Rat).